Reading from the N-terminus, the 567-residue chain is Proline--tRNA ligase (567 aa).

The protein belongs to the class-II aminoacyl-tRNA synthetase family. ProS type 1 subfamily. Homodimer.

Its subcellular location is the cytoplasm. The catalysed reaction is tRNA(Pro) + L-proline + ATP = L-prolyl-tRNA(Pro) + AMP + diphosphate. Functionally, catalyzes the attachment of proline to tRNA(Pro) in a two-step reaction: proline is first activated by ATP to form Pro-AMP and then transferred to the acceptor end of tRNA(Pro). As ProRS can inadvertently accommodate and process non-cognate amino acids such as alanine and cysteine, to avoid such errors it has two additional distinct editing activities against alanine. One activity is designated as 'pretransfer' editing and involves the tRNA(Pro)-independent hydrolysis of activated Ala-AMP. The other activity is designated 'posttransfer' editing and involves deacylation of mischarged Ala-tRNA(Pro). The misacylated Cys-tRNA(Pro) is not edited by ProRS. The chain is Proline--tRNA ligase from Staphylococcus aureus (strain bovine RF122 / ET3-1).